We begin with the raw amino-acid sequence, 586 residues long: Arginine--tRNA ligase (586 aa).

The 'HIGH' region motif lies at 127 to 137; sequence PNVAKEMHVGH.

It belongs to the class-I aminoacyl-tRNA synthetase family. As to quaternary structure, monomer.

It localises to the cytoplasm. The enzyme catalyses tRNA(Arg) + L-arginine + ATP = L-arginyl-tRNA(Arg) + AMP + diphosphate. The polypeptide is Arginine--tRNA ligase (argS) (Streptomyces coelicolor (strain ATCC BAA-471 / A3(2) / M145)).